Consider the following 224-residue polypeptide: Peroxiredoxin-like 2A (224 aa).

Residues 14-112 (MWSVGLGAVG…SKLGVPLYAV (99 aa)) form a thioredoxin fold region. Position 85 (U85) is a non-standard amino acid, selenocysteine. C88 (redox-active) is an active-site residue.

It belongs to the peroxiredoxin-like PRXL2 family. PRXL2A subfamily.

Its subcellular location is the cytoplasm. Functionally, involved in redox regulation of the cell. Acts as an antioxidant. Inhibits TNFSF11-induced NFKB1 and JUN activation and osteoclast differentiation. May affect bone resorption and help to maintain bone mass. The chain is Peroxiredoxin-like 2A (PRXL2A) from Gallus gallus (Chicken).